A 681-amino-acid chain; its full sequence is Peroxisomal acyl-coenzyme A oxidase 2 (681 aa).

The residue at position 9 (Ser-9) is a Phosphoserine. N6-succinyllysine occurs at positions 66, 137, 453, 561, and 667. A Microbody targeting signal motif is present at residues 679–681 (SNL).

The protein belongs to the acyl-CoA oxidase family. As to quaternary structure, homodimer. FAD serves as cofactor. Liver and kidney.

It is found in the peroxisome. It catalyses the reaction (25R)-3alpha,7alpha,12alpha-trihydroxy-5beta-cholestan-26-oyl-CoA + A + H2O = (24R,25R)-3alpha,7alpha,12alpha,24-tetrahydroxy-5beta-cholestan-26-oyl-CoA + AH2. It carries out the reaction (25S)-3alpha,7alpha,12alpha-trihydroxy-5beta-cholestan-26-oyl-CoA + O2 = (24E)-3alpha,7alpha,12alpha-trihydroxy-5beta-cholest-24-en-26-oyl-CoA + H2O2. Oxidizes the CoA esters of the bile acid intermediates di- and tri-hydroxycholestanoic acids. Capable of oxidizing short as well as long chain 2-methyl branched fatty acids. This chain is Peroxisomal acyl-coenzyme A oxidase 2, found in Oryctolagus cuniculus (Rabbit).